Reading from the N-terminus, the 2110-residue chain is Tenascin (2110 aa).

The signal sequence occupies residues 1-22; the sequence is MGAVTWLLPGIFLALFALTPEG. Asn-38 carries N-linked (GlcNAc...) asparagine glycosylation. Residues Ser-65, Ser-70, and Ser-72 each carry the phosphoserine modification. Residues 69–91 are disordered; that stretch reads ESASGEKDLTPTPESSGSFQEHT. The O-linked (Xyl...) (chondroitin sulfate) serine glycan is linked to Ser-72. The span at 80 to 89 shows a compositional bias: polar residues; that stretch reads TPESSGSFQE. Positions 118-142 form a coiled coil; it reads DVKELLSRLEELELLVSSLREQCTM. 2 N-linked (GlcNAc...) asparagine glycosylation sites follow: Asn-166 and Asn-184. The EGF-like 1; incomplete domain maps to 174-185; that stretch reads CVCEPGWKGPNC. 14 consecutive EGF-like domains span residues 186 to 216, 217 to 247, 248 to 279, 280 to 310, 311 to 341, 342 to 372, 373 to 403, 404 to 434, 435 to 465, 466 to 496, 497 to 527, 528 to 558, 559 to 589, and 590 to 621; these read SEPD…GEDC, SQLA…GPDC, GLEV…GEDC, NEPL…GEDC, SELI…GEDC, GELT…GADC, SEKR…GADC, GDLQ…GEDC, SQRR…GFDC, SEMS…GEDC, RDRR…GPDC, AELS…GKDC, KEQR…GLDC, and GQRS…IDCS. 42 disulfide bridges follow: Cys-190-Cys-200, Cys-194-Cys-205, Cys-207-Cys-216, Cys-221-Cys-231, Cys-225-Cys-236, Cys-238-Cys-247, Cys-252-Cys-263, Cys-256-Cys-268, Cys-270-Cys-279, Cys-284-Cys-294, Cys-288-Cys-299, Cys-301-Cys-310, Cys-315-Cys-325, Cys-319-Cys-330, Cys-332-Cys-341, Cys-346-Cys-356, Cys-350-Cys-361, Cys-363-Cys-372, Cys-377-Cys-387, Cys-381-Cys-392, Cys-394-Cys-403, Cys-408-Cys-418, Cys-412-Cys-423, Cys-425-Cys-434, Cys-439-Cys-449, Cys-443-Cys-454, Cys-456-Cys-465, Cys-470-Cys-480, Cys-474-Cys-485, Cys-487-Cys-496, Cys-501-Cys-511, Cys-505-Cys-516, Cys-518-Cys-527, Cys-532-Cys-542, Cys-536-Cys-547, Cys-549-Cys-558, Cys-563-Cys-573, Cys-567-Cys-578, Cys-580-Cys-589, Cys-594-Cys-604, Cys-598-Cys-609, and Cys-611-Cys-620. An N-linked (GlcNAc...) asparagine glycan is attached at Asn-327. Fibronectin type-III domains are found at residues 625-715, 716-804, 805-894, 895-988, 989-1077, 1078-1165, 1167-1259, 1260-1348, 1349-1440, 1442-1530, 1531-1620, 1621-1710, 1711-1797, and 1798-1886; these read PPKD…LPAP, EGLK…TRLD, APSH…TGLD, APRN…IDAP, KDLR…VPSL, ENLT…TGTT, NLGE…LPQL, GGLS…AREP, EIGN…ALPL, ENLT…EAEP, EVDN…TAMG, SPKE…ALDG, PSGL…TDLD, and SPRE…IGLL. N-linked (GlcNAc...) asparagine glycosylation occurs at Asn-788. The residue at position 905 (Thr-905) is a Phosphothreonine. Residues Asn-1018, Asn-1079, Asn-1093, Asn-1119, Asn-1184, Asn-1210, Asn-1275, Asn-1301, Asn-1354, Asn-1364, Asn-1394, and Asn-1443 are each glycosylated (N-linked (GlcNAc...) asparagine). Asn-1718 carries an N-linked (GlcNAc...) asparagine glycan. Residues 1884–2099 form the Fibrinogen C-terminal domain; sequence GLLYPFPRDC…FAEMKLRPSN (216 aa). N-linked (GlcNAc...) asparagine glycans are attached at residues Asn-1969 and Asn-2071.

The protein belongs to the tenascin family. As to quaternary structure, homohexamer; disulfide-linked. A homotrimer may be formed in the triple coiled-coil region and may be stabilized by disulfide rings at both ends. Two of such half-hexabrachions may be disulfide linked within the central globule. Interacts with CSPG4. Interacts (via the 3rd fibronectin type-III domain) with integrin ITGA9:ITGB1. In terms of processing, N-glycosylated. Expressed in the corneal limbus, the periosteum and the rib molecular layer of the cerebellum, the matrix of kidney tubules, blood vessels, stomach and intestine (at protein level). As to expression, weakly expressed in the brain. In terms of tissue distribution, highly expressed in the thymus and moderately expressed in the brain.

It is found in the secreted. It localises to the extracellular space. The protein localises to the extracellular matrix. Functionally, extracellular matrix protein implicated in guidance of migrating neurons as well as axons during development, synaptic plasticity as well as neuronal regeneration. Promotes neurite outgrowth when provided to neurons in culture. May play a role in supporting the growth of epithelial tumors. Ligand for integrins ITGA8:ITGB1, ITGA9:ITGB1, ITGAV:ITGB3 and ITGAV:ITGB6. In tumors, stimulates angiogenesis by elongation, migration and sprouting of endothelial cells. The protein is Tenascin of Mus musculus (Mouse).